The primary structure comprises 533 residues: Probable bifunctional tRNA threonylcarbamoyladenosine biosynthesis protein (533 aa).

Positions 1 to 328 are kae1; that stretch reads MRILGIEGTA…FRPDAVTVTW (328 aa). Fe cation contacts are provided by His-112 and His-116. L-threonylcarbamoyladenylate contacts are provided by residues 133–137, Asp-165, Gly-178, Glu-182, and Asn-261; that span reads NASGA. A Fe cation-binding site is contributed by Asp-289. Positions 339 to 533 constitute a Protein kinase domain; it reads PATLDKTPVR…RDIESRGRYH (195 aa). ATP contacts are provided by residues 347-354 and Lys-363; that span reads VRGAEAIV. Asp-452 functions as the Proton acceptor; for kinase activity in the catalytic mechanism.

It in the N-terminal section; belongs to the KAE1 / TsaD family. The protein in the C-terminal section; belongs to the protein kinase superfamily. Tyr protein kinase family. BUD32 subfamily. In terms of assembly, component of the KEOPS complex that consists of Kae1, Bud32, Cgi121 and Pcc1; the whole complex dimerizes. Fe(2+) serves as cofactor.

The protein resides in the cytoplasm. It carries out the reaction L-seryl-[protein] + ATP = O-phospho-L-seryl-[protein] + ADP + H(+). The catalysed reaction is L-threonyl-[protein] + ATP = O-phospho-L-threonyl-[protein] + ADP + H(+). It catalyses the reaction L-threonylcarbamoyladenylate + adenosine(37) in tRNA = N(6)-L-threonylcarbamoyladenosine(37) in tRNA + AMP + H(+). Functionally, required for the formation of a threonylcarbamoyl group on adenosine at position 37 (t(6)A37) in tRNAs that read codons beginning with adenine. Is a component of the KEOPS complex that is probably involved in the transfer of the threonylcarbamoyl moiety of threonylcarbamoyl-AMP (TC-AMP) to the N6 group of A37. The Kae1 domain likely plays a direct catalytic role in this reaction. The Bud32 domain probably displays kinase activity that regulates Kae1 function. The sequence is that of Probable bifunctional tRNA threonylcarbamoyladenosine biosynthesis protein from Haloquadratum walsbyi (strain DSM 16790 / HBSQ001).